The following is a 498-amino-acid chain: ATP synthase subunit alpha, chloroplastic (498 aa).

Residue 170 to 177 (GDRQTGKT) participates in ATP binding.

It belongs to the ATPase alpha/beta chains family. F-type ATPases have 2 components, CF(1) - the catalytic core - and CF(0) - the membrane proton channel. CF(1) has five subunits: alpha(3), beta(3), gamma(1), delta(1), epsilon(1). CF(0) has four main subunits: a, b, b' and c.

Its subcellular location is the plastid. The protein localises to the chloroplast thylakoid membrane. The catalysed reaction is ATP + H2O + 4 H(+)(in) = ADP + phosphate + 5 H(+)(out). Produces ATP from ADP in the presence of a proton gradient across the membrane. The alpha chain is a regulatory subunit. This is ATP synthase subunit alpha, chloroplastic from Oltmannsiellopsis viridis (Marine flagellate).